Here is a 170-residue protein sequence, read N- to C-terminus: Probable calcium-binding protein CML27 (170 aa).

N-acetylalanine is present on A2. EF-hand domains lie at 19 to 54, 55 to 85, 88 to 123, and 136 to 159; these read ANPE…MGTS, YTET…TLCR, SSAA…LGMS, and VDAD…SSLL. Residues D32, N34, D36, K38, E43, D68, D70, D72, Y74, E79, D101, D103, N105, E112, D137, D139, D141, N143, and E148 each contribute to the Ca(2+) site.

Potential calcium sensor. This is Probable calcium-binding protein CML27 (CML27) from Arabidopsis thaliana (Mouse-ear cress).